Reading from the N-terminus, the 1437-residue chain is MASSSTETQLQRIIRDLQDAATELSHEFKEGGEPITDDSTSLHKFSYKLEYLLQFDQKEKASLLGSKKDYWDYFCACLAKVKGANDGIRFVRSISELRTSLGKGRAFIRYSLVHQRLADTLQQCFMNTKVTSDWYYARSPFLKPKLSSDIVGQLYELTEVQFDLAPRGYDLDAAWPTFARRTLATSTSAYMWKPPSRSSSMSSLVSNYLQTQEMASSLDLNCSLNNEALESFDEMRLELDQLEVREKQLQERVQQLDRENQALRMLVSRQGGQLQVEKEMGYLAVEDSIGLVSLVAELQKQGDVSQATVKKLQSCLQALELNVDKKEYSPSALQLENMAKELDTVRGSLGRENQLLASLSERLARAEKGEKTPPDTELHQEPVPADLVLKFQELKGKLQALEGENTEAQELNRQQSIKLEQLAKELQLKEEARASLAHLVKDVVPLQEELSGKKQESAQLRRQLQESLAHLSSVEEELAEARQQEKQHREEKQLLEQEATSLTWQLQLLETQLGQVSQLVSDLEEQKKQLMQERDHLSQRVGTLEQLAEVHGPPQSAEMPEKRQQCLREEQVNNSTVSEAEQEELQKELQNMVDRNQLLEGKLQALQTDYKALQQREAAIQGSLASLEAEQASIRHLGNQMEASLLAVKKAKETMKAQVAEKEAALQSKESECQRLQEEADQCRLQAEAQAQELRALENQCQQQIQLIEVLSAEKGQQGLSLPQVNTDQLALSQAQLEIHQGEAQRLQNEVVDLQAKLQVALGDRDKLQSQLGVAETVLREHKTLVQQLKEQNEALNRAHVQELLQCSEREGILQEESIYKAQKQEQELRALQAELSQVRCSSEGAHLEHAELQDQLHRANTDTAELGIQVCALTAEKDRMEEALASLAQELQDSKEAALQERKGLELQVMQLQQEKEKLQEKVKAAEEAASSFSGLQAQLAQAEQLAQSLQETAHQEQDALKFQLSAEIMDHQNRLKTANEECGHLRAQLEEQGQQLQMTKEAVQELEITKAAMEEKLNCTSSHLAECQATLLRKDEESTMLQTSLERTQKELEKATSKIQEYYNKLCQEVTNRERNDQKMLADLDDLNRTKKYLEERLIELLRDKDALWQKSDALEFQQKLSAEEKCLGDMEVNHCHDCKREFSWIVRRHHCRICGRIFCYYCCNNYVVTKPSGKKERCCRACFQKFGEGSGSNDSSGSGTSQGEPSPMVSPAEASPQSIGSQGINSVCRPPDDAVFDIITDEELCQIQESGSSLPETPTETDSMDPNTAEQDTTSNSLTPEDTEDVPMGQDAEICLLKSGELMIKLPLTVEEVASFGEGSRELFVRSSTYSLITITVAEPGLTISWVFSSDPKSISFSVVFQETEDTPLDQCKVLIPTTRCNSHKENIRGQLKVRIPGIYLLIFDNTFSRFISKKVLYHLTVDRPVIYDGSDFP.

At Ala-2 the chain carries N-acetylalanine. Residues 4-30 (SSTETQLQRIIRDLQDAATELSHEFKE) adopt a coiled-coil conformation. In terms of domain architecture, RUN spans 36 to 169 (TDDSTSLHKF…VQFDLAPRGY (134 aa)). Position 196 is a phosphoserine (Ser-196). Coiled-coil stretches lie at residues 223-270 (SLNN…VSRQ), 305-846 (SQAT…SEGA), and 873-1110 (ALTA…KDAL). A Phosphothreonine modification is found at Thr-372. Ser-837 carries the phosphoserine modification. Residues 1132–1190 (DMEVNHCHDCKREFSWIVRRHHCRICGRIFCYYCCNNYVVTKPSGKKERCCRACFQKFG) form an FYVE-type zinc finger. Residues Cys-1138, Cys-1141, Cys-1154, Cys-1157, Cys-1162, Cys-1165, Cys-1182, and Cys-1185 each contribute to the Zn(2+) site. Disordered regions lie at residues 1191–1227 (EGSG…SQGI) and 1253–1289 (SGSS…TEDV). The span at 1194–1206 (GSNDSSGSGTSQG) shows a compositional bias: low complexity. 2 stretches are compositionally biased toward polar residues: residues 1218 to 1227 (SPQSIGSQGI) and 1253 to 1283 (SGSS…SLTP). One can recognise a GOLD domain in the interval 1296 to 1425 (EICLLKSGEL…SKKVLYHLTV (130 aa)).

Can form homodimers. Interacts (via C-terminus) with MAP1LC3B. Interacts with RAB7A; the interaction with RAB7A induces FYCO1 recruitment to late endosomal/lysosomal compartments. As to expression, expressed in heart and testis. Expressed in the eye lens.

It is found in the cytoplasmic vesicle. The protein localises to the autophagosome. Its subcellular location is the endosome. It localises to the lysosome. Functionally, may mediate microtubule plus end-directed vesicle transport. In Mus musculus (Mouse), this protein is FYVE and coiled-coil domain-containing protein 1 (Fyco1).